The primary structure comprises 274 residues: Siroheme biosynthesis protein MET8 (274 aa).

NAD(+) contacts are provided by residues 23–24, 43–45, and phenylalanine 93; these read EV and SPD. The active-site Proton acceptor is aspartate 141.

This sequence belongs to the precorrin-2 dehydrogenase / sirohydrochlorin ferrochelatase family. MET8 subfamily. In terms of assembly, homodimer.

It carries out the reaction precorrin-2 + NAD(+) = sirohydrochlorin + NADH + 2 H(+). The enzyme catalyses siroheme + 2 H(+) = sirohydrochlorin + Fe(2+). The protein operates within porphyrin-containing compound metabolism; siroheme biosynthesis; siroheme from sirohydrochlorin: step 1/1. It functions in the pathway porphyrin-containing compound metabolism; siroheme biosynthesis; sirohydrochlorin from precorrin-2: step 1/1. In terms of biological role, catalyzes the conversion of precorrin-2 into siroheme. This reaction consist of the NAD-dependent oxidation of precorrin-2 into sirohydrochlorin and its subsequent ferrochelation into siroheme. The chain is Siroheme biosynthesis protein MET8 from Saccharomyces cerevisiae (strain ATCC 204508 / S288c) (Baker's yeast).